A 171-amino-acid chain; its full sequence is Der GTPase-activating protein YihI (171 aa).

Disordered stretches follow at residues 1-99 (MKKP…PQAE) and 145-171 (GLSY…KGGN). Basic and acidic residues predominate over residues 20-30 (TREELNQEARD). Residues 40–59 (HSAGSRANGSSASGSTAQNS) are compositionally biased toward low complexity. Residues 148 to 160 (YEDDEDDEEEEKQ) show a composition bias toward acidic residues.

Belongs to the YihI family. Interacts with Der.

In terms of biological role, a GTPase-activating protein (GAP) that modifies Der/EngA GTPase function. May play a role in ribosome biogenesis. This is Der GTPase-activating protein YihI from Enterobacter sp. (strain 638).